Here is a 644-residue protein sequence, read N- to C-terminus: Sodium/hydrogen exchanger 9 (644 aa).

Residues 1-20 (MAGQLRLTSGKDEDHFQHQG) are Lumenal-facing. A helical transmembrane segment spans residues 21 to 41 (AVELLAFNFLLILTILTIWLF). Residues 42–45 (KNHR) are Cytoplasmic-facing. Residues 46-66 (FRFLHETGGAMVYGLIMGLIL) form a helical membrane-spanning segment. Topologically, residues 67 to 126 (RYATAPTDIDSGTVYNCGKLLFSPSTLLVNITDQVYEYKYQREINQHNISPHQGNAILEK) are lumenal. The chain crosses the membrane as a helical span at residues 127–147 (MTFDPEIFFNVLLPPIIFHAG). Topologically, residues 148–164 (YSLKKRHFFQNLGSILT) are cytoplasmic. The helical transmembrane segment at 165-185 (YAFLGTAISCVVIGLIMYGFV) threads the bilayer. At 186 to 203 (KAMVHAGQLKSGDFHFTD) the chain is on the lumenal side. Residues 204–224 (CLFFGSLMSATDPVTVLAIFH) form a helical membrane-spanning segment. Topologically, residues 225–235 (ELHVDPDLYTL) are cytoplasmic. Residues 236 to 256 (LFGESVLNDAVAIVLTYSISI) form a helical membrane-spanning segment. At 257–277 (YSPKENPNAFDTAAFFQSVGN) the chain is on the lumenal side. The helical transmembrane segment at 278 to 298 (FLGIFAGSFAMGSAYAVVTAL) threads the bilayer. Over 299 to 309 (LTKFTKLREFP) the chain is Cytoplasmic. Residues 310–327 (MLETGLFFLLSWSAFLSA) form a helical membrane-spanning segment. Residues 328–333 (EAAGLT) lie on the Lumenal side of the membrane. The helical transmembrane segment at 334 to 350 (GIVAVLFCGVTQAHYTY) threads the bilayer. Residues 351 to 364 (NNLSSDSKLRTKQL) are Cytoplasmic-facing. A helical membrane pass occupies residues 365 to 385 (FEFMNFLAENVIFCYMGLALF). T386 is a topological domain (lumenal). Residues 387-407 (FQNHIFNALFILGAFLAIFVA) form a helical membrane-spanning segment. Residues 408–429 (RACNIYPLSFLLNLGRKQKIPW) are Cytoplasmic-facing. A helical transmembrane segment spans residues 430-450 (NFQHMMMFSGLRGAIAFALAI). Residues 451-465 (RNTESQPKQMMFTTT) lie on the Lumenal side of the membrane. Residues 466 to 486 (LLLVFFTVWVFGGGTTPMLTW) traverse the membrane as a helical segment. Over 487–644 (LQIRVGVDLD…EQTRGQPQMD (158 aa)) the chain is Cytoplasmic.

Belongs to the monovalent cation:proton antiporter 1 (CPA1) transporter (TC 2.A.36) family. In terms of assembly, homodimer; phosphatidylinositol-4,5-bisphosphate (PIP2) and phosphatidylinositol 3,4,5-trisphosphate (PIP3) could be involved in the dimer stabilization. Interacts (via the C-terminus) with RACK1. Interacts with CHP1. In terms of tissue distribution, expressed in hair bundles and in vestibular hair bundles. Expressed in brain.

It localises to the late endosome membrane. The protein localises to the early endosome membrane. The protein resides in the recycling endosome membrane. It is found in the cell membrane. Its subcellular location is the cytoplasmic vesicle. It localises to the phagosome membrane. The catalysed reaction is Na(+)(in) + H(+)(out) = Na(+)(out) + H(+)(in). It carries out the reaction K(+)(in) + H(+)(out) = K(+)(out) + H(+)(in). Functionally, endosomal Na(+), K(+)/H(+) antiporter. Mediates the electroneutral exchange of endosomal luminal H(+) for a cytosolic Na(+) or K(+). By facilitating proton efflux, SLC9A9 counteracts the acidity generated by vacuolar (V)-ATPase, thereby limiting luminal acidification. Regulates organellar pH and consequently, endosome maturation and endocytic trafficking of plasma membrane receptors and neurotransporters. Promotes the recycling of transferrin receptors back to the cell surface to facilitate additional iron uptake in the brain. Regulates synaptic transmission by regulating the luminal pH of axonal endosomes. Regulates phagosome lumenal pH, thus affecting phagosome maturation, and consequently, microbicidal activity in macrophages. Can also be active at the cell surface of specialized cells, e.g., in the inner ear hair bundles uses the high K(+) of the endolymph to regulate intracelular pH. The polypeptide is Sodium/hydrogen exchanger 9 (Slc9a9) (Rattus norvegicus (Rat)).